A 250-amino-acid polypeptide reads, in one-letter code: 2,3-bisphosphoglycerate-dependent phosphoglycerate mutase (250 aa).

Substrate is bound by residues arginine 8–asparagine 15, threonine 21–glycine 22, arginine 60, glutamate 87–tyrosine 90, lysine 98, arginine 114–arginine 115, and glycine 183–asparagine 184. The Tele-phosphohistidine intermediate role is filled by histidine 9. Glutamate 87 functions as the Proton donor/acceptor in the catalytic mechanism.

This sequence belongs to the phosphoglycerate mutase family. BPG-dependent PGAM subfamily. As to quaternary structure, homodimer.

It carries out the reaction (2R)-2-phosphoglycerate = (2R)-3-phosphoglycerate. Its pathway is carbohydrate degradation; glycolysis; pyruvate from D-glyceraldehyde 3-phosphate: step 3/5. Catalyzes the interconversion of 2-phosphoglycerate and 3-phosphoglycerate. The sequence is that of 2,3-bisphosphoglycerate-dependent phosphoglycerate mutase from Bordetella avium (strain 197N).